Consider the following 632-residue polypeptide: Chaperone protein HtpG (632 aa).

An a; substrate-binding region spans residues 1–339 (MAHETMSFQA…SADLPLNVSR (339 aa)). Residues 340–559 (EILQESRDVK…DNDMSGYLQR (220 aa)) form a b region. The segment at 560-632 (MLKAAGQNAP…TNALLLSRAA (73 aa)) is c.

It belongs to the heat shock protein 90 family. As to quaternary structure, homodimer.

The protein resides in the cytoplasm. Its function is as follows. Molecular chaperone. Has ATPase activity. This is Chaperone protein HtpG from Burkholderia cenocepacia (strain HI2424).